Consider the following 407-residue polypeptide: MLYLVGFLLATVCLLVLGVNVWVLIDHFLTIDVPPSIPHPVKFRILHFCFHLTTTWGHILEKMNICSMPQFFCFLQDSLSSKENHGVFVKDLRFGTIPVRLFRPKAASSKPRRGILFFHGGGAMIGSLDSHHNLCTFLARETDSVLVSVGYRKLPYYHHPSLYHDCINASIHFLKSLKAYGIDPSRVVICGESIGGAAAVVVTQTLLSRTDIPKIRAQVLIYPILQAFYFQSPSHLMHKNIPFLTKDFMITCICKYLAIDFSWKDAMLTGACISPSAWKKYEKWLSPDNIPKRFRTTYQPPESPAPFNEAAYLETKHAMNIDISPLVADDKIIAQLPEAFLVSLHWDIIRDDVLLYKKRLEDQGVPVTWHHVEDGFHGCILLFDKKLFSFPCSLNIVNAVVSYIKDL.

The Cytoplasmic portion of the chain corresponds to 1–4 (MLYL). A helical; Signal-anchor for type II membrane protein membrane pass occupies residues 5 to 25 (VGFLLATVCLLVLGVNVWVLI). Over 26–407 (DHFLTIDVPP…NAVVSYIKDL (382 aa)) the chain is Lumenal. The Involved in the stabilization of the negatively charged intermediate by the formation of the oxyanion hole motif lies at 119–121 (HGG). The N-linked (GlcNAc...) asparagine glycan is linked to Asn-168. Residues Ser-193, Asp-347, and His-377 contribute to the active site.

This sequence belongs to the 'GDXG' lipolytic enzyme family.

Its subcellular location is the membrane. In Mus musculus (Mouse), this protein is Arylacetamide deacetylase-like 4 family member 1.